The following is a 215-amino-acid chain: Glutathione S-transferase F9 (215 aa).

Positions Val-2–Gly-81 constitute a GST N-terminal domain. Ala-11–Ser-12 serves as a coordination point for glutathione. Ser-12 is subject to Phosphoserine. Residue Met-35 is modified to Methionine sulfoxide. Residues His-39–Lys-40, Thr-52–Val-53, and Glu-65–Ser-66 each bind glutathione. In terms of domain architecture, GST C-terminal spans Thr-88–Ala-215. Methionine sulfoxide is present on residues Met-118, Met-123, and Met-184.

This sequence belongs to the GST superfamily. Phi family. Oxidated at Met-35, Met-118, Met-123 and Met-184 in oxidative stress conditions (e.g. hydrogen peroxide H(2)O(2)).

It is found in the cytoplasm. Its subcellular location is the cytosol. The catalysed reaction is RX + glutathione = an S-substituted glutathione + a halide anion + H(+). Its activity is regulated as follows. Redox-regulated enzyme; in oxidative stress conditions methionine oxidation ensure a thermodynamic and structural compensatory mechanism to guarantee H(2)O(2) peroxidase activity despite transferase activity inhibition. Functionally, in vitro, possesses glutathione S-transferase activity toward 1-chloro-2,4-dinitrobenzene (CDNB) and benzyl isothiocyanate (BITC), and glutathione peroxidase activity toward cumene hydroperoxide and linoleic acid-13-hydroperoxide. May be involved in the conjugation of reduced glutathione to a wide number of exogenous and endogenous hydrophobic electrophiles and have a detoxification role against certain herbicides. The chain is Glutathione S-transferase F9 from Arabidopsis thaliana (Mouse-ear cress).